Consider the following 407-residue polypeptide: Putative glucose/galactose transporter (407 aa).

Helical transmembrane passes span 11–31 (GSLT…DILI), 47–67 (LIQF…GNVI), 70–90 (IGYP…CALF), 96–116 (FGSY…IVCL), 139–159 (VQAF…LLIF), 180–200 (VQMP…VMYL), 225–245 (FVFG…IGSF), 263–283 (HYLV…SALM), 300–320 (IILI…ALTF), 321–341 (VGFF…LNLG), 349–369 (GVIS…GVVT), and 378–398 (NLLY…FFAL).

This sequence belongs to the major facilitator superfamily. FHS transporter (TC 2.A.1.7) family.

The protein resides in the cell inner membrane. In terms of biological role, intake of glucose and galactose. The protein is Putative glucose/galactose transporter (gluP) of Helicobacter pylori (strain J99 / ATCC 700824) (Campylobacter pylori J99).